The sequence spans 373 residues: UDP-N-acetylglucosamine--N-acetylmuramyl-(pentapeptide) pyrophosphoryl-undecaprenol N-acetylglucosamine transferase (373 aa).

UDP-N-acetyl-alpha-D-glucosamine-binding positions include 13–15 (TGG), N124, R165, S192, and Q293.

Belongs to the glycosyltransferase 28 family. MurG subfamily.

It localises to the cell inner membrane. It carries out the reaction di-trans,octa-cis-undecaprenyl diphospho-N-acetyl-alpha-D-muramoyl-L-alanyl-D-glutamyl-meso-2,6-diaminopimeloyl-D-alanyl-D-alanine + UDP-N-acetyl-alpha-D-glucosamine = di-trans,octa-cis-undecaprenyl diphospho-[N-acetyl-alpha-D-glucosaminyl-(1-&gt;4)]-N-acetyl-alpha-D-muramoyl-L-alanyl-D-glutamyl-meso-2,6-diaminopimeloyl-D-alanyl-D-alanine + UDP + H(+). It participates in cell wall biogenesis; peptidoglycan biosynthesis. Cell wall formation. Catalyzes the transfer of a GlcNAc subunit on undecaprenyl-pyrophosphoryl-MurNAc-pentapeptide (lipid intermediate I) to form undecaprenyl-pyrophosphoryl-MurNAc-(pentapeptide)GlcNAc (lipid intermediate II). In Sinorhizobium fredii (strain NBRC 101917 / NGR234), this protein is UDP-N-acetylglucosamine--N-acetylmuramyl-(pentapeptide) pyrophosphoryl-undecaprenol N-acetylglucosamine transferase.